Here is a 436-residue protein sequence, read N- to C-terminus: MLADEILELLQTKISANEFDCYIKQLKFNEKASNEDFIVFNATSELMAKFIKTRYAEKIAYLYEVKTGKKPEVEITSQTKLKNIKQNQVNVKQIKAQSSILNPGYTFENFVCGDSNQFAFLNAKAVADKPGVLYNPLFIYGTTGLGKTHLLQSVGNYCLDQGKVVICVTSDQFMIDFTTHLNSHSMTKFREKYRNCDVLLIDDVQFLGKTDKIQEEFFNTFNELIAKKGQIVMTSDRPAKILKGFDERLKSRFEQSIMADITPPELDTKIAIIIKKCEFDKIYLNKEVIDYIATNMGDNIREIEGAIINLNAYASLMRVEITLEFAKNTLKDLIKEKHENINLETIIEIVSKELNIKPSDIKSKSRVQNIVEARRIIIYLAKMLTTNSMPQIANYFGMKDHSAVSHNIKKINELMESNEIFNLRVTEIKNKILTKG.

Residues 1–69 are domain I, interacts with DnaA modulators; the sequence is MLADEILELL…AYLYEVKTGK (69 aa). Positions 69-99 are domain II; sequence KKPEVEITSQTKLKNIKQNQVNVKQIKAQSS. Positions 100–314 are domain III, AAA+ region; the sequence is ILNPGYTFEN…GAIINLNAYA (215 aa). 4 residues coordinate ATP: G144, G146, K147, and T148. The segment at 315–436 is domain IV, binds dsDNA; that stretch reads SLMRVEITLE…EIKNKILTKG (122 aa).

It belongs to the DnaA family. In terms of assembly, oligomerizes as a right-handed, spiral filament on DNA at oriC.

Its subcellular location is the cytoplasm. Plays an essential role in the initiation and regulation of chromosomal replication. ATP-DnaA binds to the origin of replication (oriC) to initiate formation of the DNA replication initiation complex once per cell cycle. Binds the DnaA box (a 9 base pair repeat at the origin) and separates the double-stranded (ds)DNA. Forms a right-handed helical filament on oriC DNA; dsDNA binds to the exterior of the filament while single-stranded (ss)DNA is stabiized in the filament's interior. The ATP-DnaA-oriC complex binds and stabilizes one strand of the AT-rich DNA unwinding element (DUE), permitting loading of DNA polymerase. After initiation quickly degrades to an ADP-DnaA complex that is not apt for DNA replication. Binds acidic phospholipids. The sequence is that of Chromosomal replication initiator protein DnaA from Campylobacter concisus (strain 13826).